Consider the following 95-residue polypeptide: UPF0223 protein Bsph_1378 (95 aa).

This sequence belongs to the UPF0223 family.

This chain is UPF0223 protein Bsph_1378, found in Lysinibacillus sphaericus (strain C3-41).